Consider the following 373-residue polypeptide: Chaperone protein DnaJ (373 aa).

Residues 4–69 (DYYETLSVER…SKRRIYDTYG (66 aa)) form the J domain. The CR-type zinc-finger motif lies at 131-209 (GVSKEVKLSR…CHGEGLVKKT (79 aa)). Zn(2+) contacts are provided by Cys144, Cys147, Cys161, Cys164, Cys183, Cys186, Cys197, and Cys200. CXXCXGXG motif repeat units lie at residues 144-151 (CWTCEGTG), 161-168 (CPTCNGRG), 183-190 (CPECEGEG), and 197-204 (CNDCHGEG).

This sequence belongs to the DnaJ family. In terms of assembly, homodimer. Zn(2+) serves as cofactor.

It localises to the cytoplasm. Participates actively in the response to hyperosmotic and heat shock by preventing the aggregation of stress-denatured proteins and by disaggregating proteins, also in an autonomous, DnaK-independent fashion. Unfolded proteins bind initially to DnaJ; upon interaction with the DnaJ-bound protein, DnaK hydrolyzes its bound ATP, resulting in the formation of a stable complex. GrpE releases ADP from DnaK; ATP binding to DnaK triggers the release of the substrate protein, thus completing the reaction cycle. Several rounds of ATP-dependent interactions between DnaJ, DnaK and GrpE are required for fully efficient folding. Also involved, together with DnaK and GrpE, in the DNA replication of plasmids through activation of initiation proteins. This chain is Chaperone protein DnaJ, found in Desulfotalea psychrophila (strain LSv54 / DSM 12343).